Reading from the N-terminus, the 137-residue chain is Nucleoside diphosphate kinase (137 aa).

The ATP site is built by Lys-9, Phe-57, Arg-85, Thr-91, Arg-102, and Asn-112. His-115 serves as the catalytic Pros-phosphohistidine intermediate.

Belongs to the NDK family. In terms of assembly, homotetramer. Mg(2+) serves as cofactor.

The protein localises to the cytoplasm. The catalysed reaction is a 2'-deoxyribonucleoside 5'-diphosphate + ATP = a 2'-deoxyribonucleoside 5'-triphosphate + ADP. The enzyme catalyses a ribonucleoside 5'-diphosphate + ATP = a ribonucleoside 5'-triphosphate + ADP. Functionally, major role in the synthesis of nucleoside triphosphates other than ATP. The ATP gamma phosphate is transferred to the NDP beta phosphate via a ping-pong mechanism, using a phosphorylated active-site intermediate. The polypeptide is Nucleoside diphosphate kinase (Desulfotalea psychrophila (strain LSv54 / DSM 12343)).